The primary structure comprises 196 residues: Large ribosomal subunit protein bL9 (196 aa).

This sequence belongs to the bacterial ribosomal protein bL9 family.

Binds to the 23S rRNA. In Rhodopseudomonas palustris (strain HaA2), this protein is Large ribosomal subunit protein bL9.